The primary structure comprises 496 residues: MDISILWVAIILVISSYFIFMNKWRAAKLPENLPPSPPKLPVIGHLHLLRGGLPQHVLRGITQKYGAVAHLQLGEVYSVVLSSAESTKQAMKVLDPTFADRFDSFGSQIMWYNNNDMIFSRYNDHWRQIRKICVSELLSPKNVRSFGFIRQDEMARLIRVFESSVGVPINASEEISKMSCAIVCRAAFGSVLKDQGLLADLVKEALGMASGFELADLYPSSWLLNLLCFNKYRLRRMRQRLDDILDGFLEEHRVKKSGEFGGEDIIDVLYRMQKDSENKVPITNSGIKGFIFDVFSAGTETSATTIQWALSELMKNPEKLAKAQAEVREKLKGKTNPDVAEVQEIKYPHSVVKETLRLHPPFPLIPRLCKEECEVTGYTIPAKTRILVNVWSIGRDPAYWKDPDTFNPDRFDEVSRDVIGNDFELIPFGAGRRICPGLHFGLANVEVPLAQLLYHFEWKLPQGMTPADMDMSETPGLSGPRKNPLIMVPTIHNPTS.

The helical; Signal-anchor for type II membrane protein transmembrane segment at 1 to 21 (MDISILWVAIILVISSYFIFM) threads the bilayer. Cys-435 provides a ligand contact to heme. Residues 471–496 (MSETPGLSGPRKNPLIMVPTIHNPTS) are disordered.

The protein belongs to the cytochrome P450 family. Requires heme as cofactor.

The protein localises to the membrane. It catalyses the reaction gamma-terpinene + 2 reduced [NADPH--hemoprotein reductase] + 2 O2 = carvacrol + 2 oxidized [NADPH--hemoprotein reductase] + 3 H2O + 2 H(+). The enzyme catalyses (4S)-limonene + reduced [NADPH--hemoprotein reductase] + O2 = (1S,5R)-carveol + oxidized [NADPH--hemoprotein reductase] + H2O + H(+). It carries out the reaction (4R)-limonene + reduced [NADPH--hemoprotein reductase] + O2 = (1R,5S)-carveol + oxidized [NADPH--hemoprotein reductase] + H2O + H(+). The catalysed reaction is alpha-terpinene + 2 reduced [NADPH--hemoprotein reductase] + 2 O2 = carvacrol + 2 oxidized [NADPH--hemoprotein reductase] + 3 H2O + 2 H(+). It functions in the pathway secondary metabolite biosynthesis; terpenoid biosynthesis. Involved in the biosynthesis of phenolic monoterpenes natural products thymol and carvacrol which have a broad range of biological activities acting as antimicrobial compounds, insecticides, antioxidants and pharmaceutical agents. Catalyzes the C2-hydroxylation of gamma-terpinene and alpha-terpinene to produce carvacrol. Also mediates the C6-hydroxylation of (4S)-limonene and (4R)-limonene to form carveol. This chain is Cytochrome P450 71D181, found in Thymus vulgaris (Thyme).